The primary structure comprises 150 residues: UPF0336 protein SCO4636 (150 aa).

The region spanning 8–116 (VGRSYPPTAP…STIEAIKSMA (109 aa)) is the MaoC-like domain.

Belongs to the UPF0336 family.

In Streptomyces coelicolor (strain ATCC BAA-471 / A3(2) / M145), this protein is UPF0336 protein SCO4636.